Consider the following 504-residue polypeptide: L-carnitine/gamma-butyrobetaine antiporter (504 aa).

12 helical membrane-spanning segments follow: residues 10 to 30 (IEPK…WLTV), 51 to 71 (WGWA…WLVF), 92 to 112 (IFMM…SIEI), 143 to 163 (GPLP…FFFV), 195 to 215 (FYLV…TPLV), 231 to 251 (LDAI…ACGL), 263 to 283 (SYLS…SFIM), 316 to 336 (WTVF…IFLA), 347 to 367 (LCFG…TVLG), 403 to 423 (LSTA…VTLI), 446 to 466 (LLVR…LLAL), and 475 to 495 (AIIA…LSFI).

It belongs to the BCCT transporter (TC 2.A.15) family. CaiT subfamily. In terms of assembly, homotrimer.

Its subcellular location is the cell inner membrane. It carries out the reaction 4-(trimethylamino)butanoate(in) + (R)-carnitine(out) = 4-(trimethylamino)butanoate(out) + (R)-carnitine(in). It functions in the pathway amine and polyamine metabolism; carnitine metabolism. In terms of biological role, catalyzes the exchange of L-carnitine for gamma-butyrobetaine. This is L-carnitine/gamma-butyrobetaine antiporter from Escherichia fergusonii (strain ATCC 35469 / DSM 13698 / CCUG 18766 / IAM 14443 / JCM 21226 / LMG 7866 / NBRC 102419 / NCTC 12128 / CDC 0568-73).